Consider the following 144-residue polypeptide: Large ribosomal subunit protein uL15 (144 aa).

Residues 1–48 form a disordered region; the sequence is MIKLESLQDPSPRKRRTKLLGRGPSSGHGKTSCRGHKGDGSRSGYKRR.

It belongs to the universal ribosomal protein uL15 family. In terms of assembly, part of the 50S ribosomal subunit.

Binds to the 23S rRNA. The protein is Large ribosomal subunit protein uL15 of Chlamydia caviae (strain ATCC VR-813 / DSM 19441 / 03DC25 / GPIC) (Chlamydophila caviae).